The chain runs to 63 residues: MSDTQTRDVDPKLLEILVCPVTRETLRYDREAHELISEGAGLAYPVRDGIPIMLPDEARQLDD.

Belongs to the UPF0434 family.

In Maricaulis maris (strain MCS10) (Caulobacter maris), this protein is UPF0434 protein Mmar10_2939.